The following is a 309-amino-acid chain: Sulfate adenylyltransferase subunit 2 (309 aa).

It belongs to the PAPS reductase family. CysD subfamily. In terms of assembly, heterodimer composed of CysD, the smaller subunit, and CysN.

It catalyses the reaction sulfate + ATP + H(+) = adenosine 5'-phosphosulfate + diphosphate. It functions in the pathway sulfur metabolism; hydrogen sulfide biosynthesis; sulfite from sulfate: step 1/3. With CysN forms the ATP sulfurylase (ATPS) that catalyzes the adenylation of sulfate producing adenosine 5'-phosphosulfate (APS) and diphosphate, the first enzymatic step in sulfur assimilation pathway. APS synthesis involves the formation of a high-energy phosphoric-sulfuric acid anhydride bond driven by GTP hydrolysis by CysN coupled to ATP hydrolysis by CysD. In Mycobacterium sp. (strain KMS), this protein is Sulfate adenylyltransferase subunit 2.